The primary structure comprises 31 residues: Cyclotide cter-E (31 aa).

The cyclopeptide (Gly-Asp) cross-link spans 1–31 (GIPCAESCVWIPCTVTALLGCSCKDKVCYLD). Intrachain disulfides connect Cys4-Cys21, Cys8-Cys23, and Cys13-Cys28.

Post-translationally, contains 3 disulfide bonds. This is a cyclic peptide.

Its function is as follows. Probably participates in a plant defense mechanism. The sequence is that of Cyclotide cter-E from Clitoria ternatea (Butterfly pea).